The chain runs to 101 residues: Osteocalcin (101 aa).

Residues 1 to 19 form the signal peptide; the sequence is MKLAILTVLLLGAAVLCLG. The propeptide occupies 20 to 52; it reads SKDADHSNSVGESHSSEAFISRQESASFARLKR. A Gla domain is found at 53 to 99; that stretch reads SYGNNVGQGAAVGSPLESQREVCELNPDCDELADHIGFQEAYRRFYG. Residues glutamate 69, glutamate 73, glutamate 76, and aspartate 82 each coordinate Ca(2+). Residues glutamate 69, glutamate 73, and glutamate 76 each carry the 4-carboxyglutamate modification. Residues cysteine 75 and cysteine 81 are joined by a disulfide bond.

It belongs to the osteocalcin/matrix Gla protein family. Gamma-carboxyglutamate residues are formed by vitamin K dependent carboxylation by GGCX. These residues are essential for the binding of calcium.

The protein resides in the secreted. Its function is as follows. The carboxylated form is one of the main organic components of the bone matrix, which constitutes 1-2% of the total bone protein. The carboxylated form binds strongly to apatite and calcium. This chain is Osteocalcin (bglap), found in Xenopus laevis (African clawed frog).